A 370-amino-acid chain; its full sequence is 5-hydroxytryptamine receptor 5B (370 aa).

A disordered region spans residues 1 to 36 (MEVSNLSGATPGLAFPPGPESCSDSPSSGRSMGSTP). Topologically, residues 1 to 48 (MEVSNLSGATPGLAFPPGPESCSDSPSSGRSMGSTPGGLILPGREPPF) are extracellular. Asn-5 is a glycosylation site (N-linked (GlcNAc...) asparagine). The segment covering 20–36 (ESCSDSPSSGRSMGSTP) has biased composition (low complexity). The helical transmembrane segment at 49–75 (SAFTVLVVTLLVLLIAATFLWNLLVLV) threads the bilayer. Residues 76–88 (TILRVRAFHRVPH) lie on the Cytoplasmic side of the membrane. A helical membrane pass occupies residues 89–115 (NLVASTAVSDVLVAVLVMPLSLVSELS). Residues 116-127 (AGRRWQLGRSLC) lie on the Extracellular side of the membrane. Cys-127 and Cys-205 form a disulfide bridge. The helical transmembrane segment at 128–150 (HVWISFDVLCCTASIWNVAAIAL) threads the bilayer. Asp-134 provides a ligand contact to serotonin. Residues 151 to 168 (DRYWTITRHLQYTLRTRS) are Cytoplasmic-facing. Residues 169–189 (RASALMIAITWALSALIALAP) traverse the membrane as a helical segment. Topologically, residues 190–211 (LLFGWGEAYDARLQRCQVSQEP) are extracellular. A helical membrane pass occupies residues 212-233 (SYAVFSTCGAFYLPLAVVLFVY). Over 234–300 (WKIYKAAKFR…QKEKRAAMMV (67 aa)) the chain is Cytoplasmic. The helical transmembrane segment at 301 to 325 (GILIGVFVLCWIPFFLTELISPLCA) threads the bilayer. Topologically, residues 326 to 327 (CS) are extracellular. Residues 328 to 352 (LPPIWKSIFLWLGYSNSFFNPLIYT) traverse the membrane as a helical segment. Over 353 to 370 (AFNKNYNNAFKSLFTKQR) the chain is Cytoplasmic.

It belongs to the G-protein coupled receptor 1 family. As to expression, expressed predominantly in the central nervous system; in the hippocampus, habenula, and the doral raphe.

It is found in the cell membrane. In terms of biological role, G-protein coupled receptor for 5-hydroxytryptamine (serotonin), a biogenic hormone that functions as a neurotransmitter, a hormone and a mitogen. Also functions as a receptor for ergot alkaloid derivatives and other psychoactive substances. Ligand binding causes a conformation change that triggers signaling via guanine nucleotide-binding proteins (G proteins) and modulates the activity of downstream effectors. Htr5b is coupled to G(i)/G(o) G alpha proteins and mediates inhibitory neurotransmission: signaling inhibits adenylate cyclase activity and activates a phosphatidylinositol-calcium second messenger system that regulates the release of Ca(2+) ions from intracellular stores. This Mus musculus (Mouse) protein is 5-hydroxytryptamine receptor 5B.